Consider the following 249-residue polypeptide: 2,3-bisphosphoglycerate-dependent phosphoglycerate mutase (249 aa).

Substrate is bound by residues 8-15 (RHGESIWN), 21-22 (TG), R60, 87-90 (ERHY), K98, 114-115 (RR), and 183-184 (GN). The active-site Tele-phosphohistidine intermediate is the H9. Residue E87 is the Proton donor/acceptor of the active site.

The protein belongs to the phosphoglycerate mutase family. BPG-dependent PGAM subfamily.

The catalysed reaction is (2R)-2-phosphoglycerate = (2R)-3-phosphoglycerate. It functions in the pathway carbohydrate degradation; glycolysis; pyruvate from D-glyceraldehyde 3-phosphate: step 3/5. Catalyzes the interconversion of 2-phosphoglycerate and 3-phosphoglycerate. In Caldanaerobacter subterraneus subsp. tengcongensis (strain DSM 15242 / JCM 11007 / NBRC 100824 / MB4) (Thermoanaerobacter tengcongensis), this protein is 2,3-bisphosphoglycerate-dependent phosphoglycerate mutase.